We begin with the raw amino-acid sequence, 529 residues long: Phenylalanine N-monooxygenase (529 aa).

Residues 1-21 (MLDSTPMLAFIIGLLLLALTM) traverse the membrane as a helical segment. Cys467 contacts heme.

It belongs to the cytochrome P450 family. Requires heme as cofactor.

It localises to the endoplasmic reticulum membrane. The catalysed reaction is L-phenylalanine + 2 reduced [NADPH--hemoprotein reductase] + 2 O2 = (E)-phenylacetaldehyde oxime + 2 oxidized [NADPH--hemoprotein reductase] + CO2 + 3 H2O + 2 H(+). It participates in secondary metabolite biosynthesis; phenylglucosinolate biosynthesis. Functionally, converts L-phenylalanine into phenylacetaldoxime, the precursor of benzylglucosinolate (glucotropeolin). In Arabidopsis thaliana (Mouse-ear cress), this protein is Phenylalanine N-monooxygenase (CYP79A2).